Here is a 105-residue protein sequence, read N- to C-terminus: Ribonuclease P protein component 4 (105 aa).

Positions 63, 66, 89, and 92 each coordinate Zn(2+).

The protein belongs to the eukaryotic/archaeal RNase P protein component 4 family. As to quaternary structure, consists of a catalytic RNA component and at least 4-5 protein subunits. Zn(2+) serves as cofactor.

The protein resides in the cytoplasm. The catalysed reaction is Endonucleolytic cleavage of RNA, removing 5'-extranucleotides from tRNA precursor.. Part of ribonuclease P, a protein complex that generates mature tRNA molecules by cleaving their 5'-ends. This chain is Ribonuclease P protein component 4, found in Methanoculleus marisnigri (strain ATCC 35101 / DSM 1498 / JR1).